A 274-amino-acid chain; its full sequence is Thymidylate synthase (274 aa).

Arg-21 provides a ligand contact to dUMP. Residue His-51 coordinates (6R)-5,10-methylene-5,6,7,8-tetrahydrofolate. Arg-123–Arg-124 lines the dUMP pocket. The active-site Nucleophile is the Cys-156. DUMP is bound by residues Arg-176–Asp-179, Asn-187, and His-217–Tyr-219. (6R)-5,10-methylene-5,6,7,8-tetrahydrofolate is bound at residue Asp-179. Residue Ser-273 participates in (6R)-5,10-methylene-5,6,7,8-tetrahydrofolate binding.

Belongs to the thymidylate synthase family. Bacterial-type ThyA subfamily. Homodimer.

Its subcellular location is the cytoplasm. It catalyses the reaction dUMP + (6R)-5,10-methylene-5,6,7,8-tetrahydrofolate = 7,8-dihydrofolate + dTMP. The protein operates within pyrimidine metabolism; dTTP biosynthesis. Its function is as follows. Catalyzes the reductive methylation of 2'-deoxyuridine-5'-monophosphate (dUMP) to 2'-deoxythymidine-5'-monophosphate (dTMP) while utilizing 5,10-methylenetetrahydrofolate (mTHF) as the methyl donor and reductant in the reaction, yielding dihydrofolate (DHF) as a by-product. This enzymatic reaction provides an intracellular de novo source of dTMP, an essential precursor for DNA biosynthesis. The polypeptide is Thymidylate synthase (Francisella tularensis subsp. holarctica (strain FTNF002-00 / FTA)).